Reading from the N-terminus, the 76-residue chain is DNA-directed RNA polymerase subunit omega (76 aa).

It belongs to the RNA polymerase subunit omega family. The RNAP catalytic core consists of 2 alpha, 1 beta, 1 beta' and 1 omega subunit. When a sigma factor is associated with the core the holoenzyme is formed, which can initiate transcription.

The enzyme catalyses RNA(n) + a ribonucleoside 5'-triphosphate = RNA(n+1) + diphosphate. Promotes RNA polymerase assembly. Latches the N- and C-terminal regions of the beta' subunit thereby facilitating its interaction with the beta and alpha subunits. The protein is DNA-directed RNA polymerase subunit omega (rpoZ) of Aquifex aeolicus (strain VF5).